Here is a 361-residue protein sequence, read N- to C-terminus: Biotin synthase (361 aa).

In terms of domain architecture, Radical SAM core spans 47-278 (VHGDEVALCG…AAHIFVMGGR (232 aa)). [4Fe-4S] cluster contacts are provided by Cys65, Cys69, and Cys72. Residues Ser110, Cys143, and Cys203 each coordinate [2Fe-2S] cluster.

It belongs to the radical SAM superfamily. Biotin synthase family. As to quaternary structure, homodimer. The cofactor is [4Fe-4S] cluster. Requires [2Fe-2S] cluster as cofactor.

It carries out the reaction (4R,5S)-dethiobiotin + (sulfur carrier)-SH + 2 reduced [2Fe-2S]-[ferredoxin] + 2 S-adenosyl-L-methionine = (sulfur carrier)-H + biotin + 2 5'-deoxyadenosine + 2 L-methionine + 2 oxidized [2Fe-2S]-[ferredoxin]. The protein operates within cofactor biosynthesis; biotin biosynthesis; biotin from 7,8-diaminononanoate: step 2/2. Functionally, catalyzes the conversion of dethiobiotin (DTB) to biotin by the insertion of a sulfur atom into dethiobiotin via a radical-based mechanism. The polypeptide is Biotin synthase (Anaeromyxobacter dehalogenans (strain 2CP-C)).